The chain runs to 448 residues: Phosphoglucosamine mutase (448 aa).

Serine 100 (phosphoserine intermediate) is an active-site residue. Mg(2+) contacts are provided by serine 100, aspartate 240, aspartate 242, and aspartate 244. At serine 100 the chain carries Phosphoserine.

The protein belongs to the phosphohexose mutase family. Mg(2+) serves as cofactor. Post-translationally, activated by phosphorylation.

It carries out the reaction alpha-D-glucosamine 1-phosphate = D-glucosamine 6-phosphate. Functionally, catalyzes the conversion of glucosamine-6-phosphate to glucosamine-1-phosphate. This chain is Phosphoglucosamine mutase, found in Bacillus pumilus (strain SAFR-032).